We begin with the raw amino-acid sequence, 209 residues long: Pyroglutamyl-peptidase 1 (209 aa).

Active-site residues include glutamate 85, cysteine 149, and histidine 168.

The protein belongs to the peptidase C15 family. As to quaternary structure, monomer.

Its subcellular location is the cytoplasm. It carries out the reaction Release of an N-terminal pyroglutamyl group from a polypeptide, the second amino acid generally not being Pro.. Its function is as follows. Removes 5-oxoproline from various penultimate amino acid residues except L-proline. This is Pyroglutamyl-peptidase 1 (Pgpep1) from Rattus norvegicus (Rat).